Consider the following 176-residue polypeptide: Trypsin inhibitor 1B (176 aa).

2 cysteine pairs are disulfide-bonded: cysteine 39–cysteine 83 and cysteine 132–cysteine 143.

The protein belongs to the protease inhibitor I3 (leguminous Kunitz-type inhibitor) family.

Inhibits trypsin stoichiometrically. This chain is Trypsin inhibitor 1B, found in Erythrina variegata (Indian coral tree).